A 478-amino-acid chain; its full sequence is Transcription factor PIF1 (478 aa).

Position 10 is a phosphothreonine; by CK2 (Thr-10). Disordered stretches follow at residues 56-80 (LHTK…QPSS), 122-144 (VSQV…PVRN), 172-210 (VRES…GGGA), 230-294 (TSSS…LSER), and 391-478 (TQTH…HTTG). The span at 69-80 (LPSMDPQQQPSS) shows a compositional bias: low complexity. A compositionally biased stretch (low complexity) spans 179–189 (SPSATPSAAAS). Thr-197 carries the phosphothreonine; by CK2 modification. Ser-202 is modified (phosphoserine; by CK2). Composition is skewed to basic and acidic residues over residues 238–272 (SEIE…ETKQ) and 284–294 (RAAEVHNLSER). Residues 284–333 (RAAEVHNLSERKRRDRINERMKALQELIPRCNKSDKASMLDEAIEYMKSL) form the bHLH domain. Residues 415-426 (PNQQYDPTSGQP) are compositionally biased toward polar residues. Phosphoserine; by CK2 occurs at positions 464, 465, 466, and 469. A compositionally biased stretch (basic and acidic residues) spans 465–478 (SSKESEDHGNHTTG).

As to quaternary structure, homodimer. Interacts with the photoactivated conformer (Pfr) of phytochromes A and B, PHYA and PHYB. Also interacts with APRR1/TOC1. Binds to RGL2, RGA and FHY3 (via N-terminus). Associates to PTAC12/HMR/PAP5 which acts as a transcriptional coactivator. Binds directly to PCH1 and PCHL; this interaction facilitates its association with phyB and its subsequent light-induced degradation. Phosphorylated at Thr-10, Thr-197, Ser-202, Ser-464, Ser-465, Ser-466 and Ser-469 by CK2. Phosphorylated and ubiquitinated after an exposure to light (especially red and far-red), in a phytochrome-dependent manner. Modified proteins undergo a proteasome-dependent degradation. Its stability and degradation plays a central role in photomorphogenesis of seedlings. Mainly expressed in leaves, stems and seedlings, and, to a lower extent, in fruits, flowers and roots.

The protein resides in the nucleus. Its activity is regulated as follows. DNA-binding ability is inhibited by PCH1 and PCHL to negatively regulate the expressions of its target genes. Functionally, transcription activator. Negatively regulates chlorophyll biosynthesis and seed germination in the dark, and lightinduced degradation of PIF1 relieves this negative regulation to promote photomorphogenesis. Binds to the G-box motif (5'-CACGTG-3') found in many light-regulated promoters. Promotes the expression of SOM, and thus modulates responses to abscisic acid (ABA) and gibberellic acid (GA). The polypeptide is Transcription factor PIF1 (Arabidopsis thaliana (Mouse-ear cress)).